We begin with the raw amino-acid sequence, 160 residues long: Invasion protein IagB (160 aa).

Residues 1–19 form the signal peptide; that stretch reads MHYFFIIVIWLLSINTAWA.

Belongs to the IagB/IpgF/P19 family.

The polypeptide is Invasion protein IagB (iagB) (Salmonella typhi).